We begin with the raw amino-acid sequence, 134 residues long: uncharacterized protein (134 aa).

3 helical membrane passes run 5 to 25 (FGIF…FGGF), 30 to 50 (LILL…ETII), and 62 to 82 (LVKK…DQLL).

This sequence belongs to the bacteriophage holin family. Cp-1 holin subfamily.

Its subcellular location is the cell membrane. This is an uncharacterized protein from Bacillus subtilis (strain 168).